A 919-amino-acid chain; its full sequence is Transcriptional regulatory protein EDS1 (919 aa).

Residues 1-54 form a disordered region; that stretch reads MSHHVPNLYGTPIRDPHEHKRNSASMGEVNQSVSSRNCERGSEKGTKQRKKASR. Residues 23 to 36 are compositionally biased toward polar residues; the sequence is SASMGEVNQSVSSR. Basic and acidic residues predominate over residues 37–46; the sequence is NCERGSEKGT. The segment at residues 56–85 is a DNA-binding region (zn(2)-C6 fungal-type); sequence CDQCRRKRIKCRFDKHTGVCQGCLEVGEKC. The disordered stretch occupies residues 297–338; the sequence is AGCPNKKLGTDGRSDKWDKNSTWKPVYRSSNPSHPSTEKNVS. Residues 304-317 show a composition bias toward basic and acidic residues; that stretch reads LGTDGRSDKWDKNS. Positions 318–338 are enriched in polar residues; sequence TWKPVYRSSNPSHPSTEKNVS.

Binds DNA in a sequence-specific manner.

Its subcellular location is the nucleus. This is Transcriptional regulatory protein EDS1 (EDS1) from Saccharomyces cerevisiae (strain Lalvin EC1118 / Prise de mousse) (Baker's yeast).